Reading from the N-terminus, the 119-residue chain is MTRVPRGYIARRRRTKMRSFASNFRGAHLRLNRMITQQVRRAFVSSHRDRGRQKRDFRRLWITRINAATRVYNVFNSYSKLIHNLSKKELILNRKMLAQVAVSNPNNLYTISNKIRTIN.

This sequence belongs to the bacterial ribosomal protein bL20 family.

The protein localises to the plastid. It localises to the chloroplast. Functionally, binds directly to 23S ribosomal RNA and is necessary for the in vitro assembly process of the 50S ribosomal subunit. It is not involved in the protein synthesizing functions of that subunit. The sequence is that of Large ribosomal subunit protein bL20c from Saccharum officinarum (Sugarcane).